Reading from the N-terminus, the 398-residue chain is Putative defective protein IntQ (398 aa).

Residues L51–V146 enclose the Core-binding (CB) domain. Residues T167–L378 enclose the Tyr recombinase domain. Residues R202, K236, R331, and H354 contribute to the active site. The active-site O-(3'-phospho-DNA)-tyrosine intermediate is Y364.

It belongs to the 'phage' integrase family.

Its function is as follows. Integrase is necessary for integration of the phage into the host genome by site-specific recombination. In conjunction with excisionase, integrase is also necessary for excision of the prophage from the host genome. The sequence is that of Putative defective protein IntQ (intQ) from Escherichia coli (strain K12).